The primary structure comprises 580 residues: Frizzled and smoothened-like protein K (580 aa).

A signal peptide spans 1–18 (MRVLFILFLFYFYTYTEA). The Extracellular portion of the chain corresponds to 19–236 (QQYYPIDPTG…QWDNIFDTSD (218 aa)). The 130-residue stretch at 25-154 (DPTGKCEQYI…SSDYNLTTYG (130 aa)) folds into the FZ domain. N-linked (GlcNAc...) asparagine glycans are attached at residues N52, N97, N149, N170, and N186. Residues 237 to 257 (AISLVSLLCSVYLFITYMVIN) traverse the membrane as a helical segment. Residues 258 to 264 (PKRNKYD) are Cytoplasmic-facing. A helical transmembrane segment spans residues 265-285 (YFFSFFVLSIILMSIAGTIGF). Residues 286 to 308 (SVGGTRKLLCPEINRRGVYTDPA) are Extracellular-facing. A helical membrane pass occupies residues 309 to 329 (VAAAGWIFQFAIINAILWFSI). The Cytoplasmic segment spans residues 330-349 (NSFELWFQIKFIKRKLHLIK). A helical membrane pass occupies residues 350 to 370 (FYILAVLVISIALSVPLSAIG). Over 371–391 (EFNAGLGNFVVWIESGKYQNW) the chain is Extracellular. Residues 392 to 412 (FFWGPLGIVLTVGTTFIGLVI) form a helical membrane-spanning segment. Residues 413–434 (WEIYKIVSSTNKSDFFKLQLKP) lie on the Cytoplasmic side of the membrane. Residues 435-455 (LMNMLLIYLTFVYLFGYNFYI) traverse the membrane as a helical segment. Residues 456-490 (HNSLNGFYGSSEEFKNCIISTDGKDCRIQGPPYSS) are Extracellular-facing. Residues 491-511 (ILMFVFCLRIYGVYCIALYGF) form a helical membrane-spanning segment. At 512 to 580 (SPKTRSIWSN…SMEPDEIILR (69 aa)) the chain is on the cytoplasmic side. The Lys-Thr-X-X-X-Trp motif, mediates interaction with the PDZ domain of Dvl family members motif lies at 514-519 (KTRSIW). The segment at 542–580 (TTKGGTSSTDIKMSTNNNSNMDSGGGKSSSMEPDEIILR) is disordered. A compositionally biased stretch (polar residues) spans 551–563 (DIKMSTNNNSNMD).

It belongs to the G-protein coupled receptor Fz/Smo family.

The protein localises to the membrane. This is Frizzled and smoothened-like protein K (fslK) from Dictyostelium discoideum (Social amoeba).